The chain runs to 422 residues: Cell division protein DivIB (422 aa).

Composition is skewed to basic and acidic residues over residues 1–23 (MVDW…KQEE) and 62–75 (EEAK…DQEQ). Positions 1–77 (MVDWDKEAQR…DFAKDQEQKH (77 aa)) are disordered. The Cytoplasmic segment spans residues 1 to 109 (MVDWDKEAQR…LQLKSVSWSR (109 aa)). Residues 110–130 (LILAAAFLFMIIFSAFWLSPL) form a helical membrane-spanning segment. The POTRA domain occupies 131–202 (NRIATIEVSG…RTVEVNVQEF (72 aa)). Residues 131–422 (NRIATIEVSG…TVTQTRSSNS (292 aa)) are Extracellular-facing. Positions 329 to 422 (NPLNDPFASP…TVTQTRSSNS (94 aa)) are disordered. Basic and acidic residues predominate over residues 338–379 (PEEKASYQEKVDQAKEKSKEKQAKADKHSSESKLGDKPKPRG). Residues 389–422 (TSSQRQTSSQSSPRPGTNSSQQSSTVTQTRSSNS) are compositionally biased toward low complexity.

It belongs to the FtsQ/DivIB family. DivIB subfamily.

The protein localises to the cell membrane. In terms of biological role, cell division protein that may be involved in stabilizing or promoting the assembly of the division complex. The polypeptide is Cell division protein DivIB (Aerococcus urinae (strain CCUG 59500 / ACS-120-V-Col10a)).